A 312-amino-acid chain; its full sequence is Beta-ketoacyl-[acyl-carrier-protein] synthase III (312 aa).

Residues C112 and H237 contribute to the active site. Residues 238–242 (QANIR) form an ACP-binding region. N267 is an active-site residue.

This sequence belongs to the thiolase-like superfamily. FabH family. Homodimer.

It localises to the cytoplasm. The catalysed reaction is malonyl-[ACP] + acetyl-CoA + H(+) = 3-oxobutanoyl-[ACP] + CO2 + CoA. It functions in the pathway lipid metabolism; fatty acid biosynthesis. In terms of biological role, catalyzes the condensation reaction of fatty acid synthesis by the addition to an acyl acceptor of two carbons from malonyl-ACP. Catalyzes the first condensation reaction which initiates fatty acid synthesis and may therefore play a role in governing the total rate of fatty acid production. Possesses both acetoacetyl-ACP synthase and acetyl transacylase activities. Its substrate specificity determines the biosynthesis of branched-chain and/or straight-chain of fatty acids. The protein is Beta-ketoacyl-[acyl-carrier-protein] synthase III of Listeria innocua serovar 6a (strain ATCC BAA-680 / CLIP 11262).